Consider the following 158-residue polypeptide: Cyclic pyranopterin monophosphate synthase (158 aa).

Substrate-binding positions include 76–78 (LCH) and 114–115 (ME). The active site involves Asp-129.

It belongs to the MoaC family. In terms of assembly, homohexamer; trimer of dimers.

It carries out the reaction (8S)-3',8-cyclo-7,8-dihydroguanosine 5'-triphosphate = cyclic pyranopterin phosphate + diphosphate. It participates in cofactor biosynthesis; molybdopterin biosynthesis. Catalyzes the conversion of (8S)-3',8-cyclo-7,8-dihydroguanosine 5'-triphosphate to cyclic pyranopterin monophosphate (cPMP). The polypeptide is Cyclic pyranopterin monophosphate synthase (Shewanella baltica (strain OS223)).